We begin with the raw amino-acid sequence, 223 residues long: Kynurenine formamidase (223 aa).

F34 is a binding site for substrate. 3 residues coordinate Zn(2+): H64, H68, and D70. The active-site Proton donor/acceptor is the H74. Positions 174 and 186 each coordinate Zn(2+).

The protein belongs to the Cyclase 1 superfamily. KynB family. In terms of assembly, homodimer. Requires Zn(2+) as cofactor.

It catalyses the reaction N-formyl-L-kynurenine + H2O = L-kynurenine + formate + H(+). Its pathway is amino-acid degradation; L-tryptophan degradation via kynurenine pathway; L-kynurenine from L-tryptophan: step 2/2. Its function is as follows. Catalyzes the hydrolysis of N-formyl-L-kynurenine to L-kynurenine, the second step in the kynurenine pathway of tryptophan degradation. The chain is Kynurenine formamidase from Polaromonas naphthalenivorans (strain CJ2).